The chain runs to 334 residues: Formamidase (334 aa).

The CN hydrolase domain occupies 14-260; sequence FLVAAIQFPV…WEIVTGEIYP (247 aa). Catalysis depends on glutamate 60, which acts as the Proton acceptor. Lysine 133 serves as the catalytic Proton donor. Cysteine 166 functions as the Nucleophile in the catalytic mechanism.

Belongs to the carbon-nitrogen hydrolase superfamily. Aliphatic amidase family.

It catalyses the reaction formamide + H2O = formate + NH4(+). Functionally, is an aliphatic amidase with a restricted substrate specificity, as it only hydrolyzes formamide. This is Formamidase from Helicobacter pylori (strain G27).